The chain runs to 207 residues: Small ribosomal subunit protein uS4 (207 aa).

The segment at 31-55 (KCKLDSKPGQHGRTSGARTSDYGTQ) is disordered. The segment covering 42–53 (GRTSGARTSDYG) has biased composition (polar residues). The 64-residue stretch at 97–160 (SRLDNVVYRM…KKQARIVEAL (64 aa)) folds into the S4 RNA-binding domain.

It belongs to the universal ribosomal protein uS4 family. In terms of assembly, part of the 30S ribosomal subunit. Contacts protein S5. The interaction surface between S4 and S5 is involved in control of translational fidelity.

In terms of biological role, one of the primary rRNA binding proteins, it binds directly to 16S rRNA where it nucleates assembly of the body of the 30S subunit. Functionally, with S5 and S12 plays an important role in translational accuracy. The polypeptide is Small ribosomal subunit protein uS4 (Burkholderia ambifaria (strain MC40-6)).